Consider the following 123-residue polypeptide: Holo-[acyl-carrier-protein] synthase (123 aa).

The Mg(2+) site is built by Asp-9 and Glu-57.

This sequence belongs to the P-Pant transferase superfamily. AcpS family. Requires Mg(2+) as cofactor.

The protein localises to the cytoplasm. It catalyses the reaction apo-[ACP] + CoA = holo-[ACP] + adenosine 3',5'-bisphosphate + H(+). Its function is as follows. Transfers the 4'-phosphopantetheine moiety from coenzyme A to a Ser of acyl-carrier-protein. The chain is Holo-[acyl-carrier-protein] synthase from Streptomyces coelicolor (strain ATCC BAA-471 / A3(2) / M145).